We begin with the raw amino-acid sequence, 338 residues long: Fructose-1,6-bisphosphatase class 1 (338 aa).

Glutamate 92, aspartate 114, leucine 116, and aspartate 117 together coordinate Mg(2+). Substrate contacts are provided by residues 117-120 (DGSS) and asparagine 210. Glutamate 284 provides a ligand contact to Mg(2+).

The protein belongs to the FBPase class 1 family. Homotetramer. Requires Mg(2+) as cofactor.

The protein resides in the cytoplasm. It carries out the reaction beta-D-fructose 1,6-bisphosphate + H2O = beta-D-fructose 6-phosphate + phosphate. It functions in the pathway carbohydrate biosynthesis; gluconeogenesis. This chain is Fructose-1,6-bisphosphatase class 1, found in Halorhodospira halophila (strain DSM 244 / SL1) (Ectothiorhodospira halophila (strain DSM 244 / SL1)).